The primary structure comprises 159 residues: 2-C-methyl-D-erythritol 2,4-cyclodiphosphate synthase (159 aa).

A divalent metal cation is bound by residues Asp10 and His12. 4-CDP-2-C-methyl-D-erythritol 2-phosphate contacts are provided by residues 10-12 (DVH) and 36-37 (HS). His44 is an a divalent metal cation binding site. 4-CDP-2-C-methyl-D-erythritol 2-phosphate-binding positions include 58-60 (DIG), 63-67 (FSDTD), and Arg144.

Belongs to the IspF family. In terms of assembly, homotrimer. Requires a divalent metal cation as cofactor.

The catalysed reaction is 4-CDP-2-C-methyl-D-erythritol 2-phosphate = 2-C-methyl-D-erythritol 2,4-cyclic diphosphate + CMP. It participates in isoprenoid biosynthesis; isopentenyl diphosphate biosynthesis via DXP pathway; isopentenyl diphosphate from 1-deoxy-D-xylulose 5-phosphate: step 4/6. Its function is as follows. Involved in the biosynthesis of isopentenyl diphosphate (IPP) and dimethylallyl diphosphate (DMAPP), two major building blocks of isoprenoid compounds. Catalyzes the conversion of 4-diphosphocytidyl-2-C-methyl-D-erythritol 2-phosphate (CDP-ME2P) to 2-C-methyl-D-erythritol 2,4-cyclodiphosphate (ME-CPP) with a corresponding release of cytidine 5-monophosphate (CMP). The chain is 2-C-methyl-D-erythritol 2,4-cyclodiphosphate synthase from Paraburkholderia phytofirmans (strain DSM 17436 / LMG 22146 / PsJN) (Burkholderia phytofirmans).